The sequence spans 555 residues: L-ascorbate oxidase homolog (555 aa).

Positions 1–23 (MRGVKLLAACLYLAAAATVVVHA) are cleaved as a signal peptide. Plastocyanin-like domains are found at residues 25 to 145 (DPYF…LRVN) and 158 to 301 (EDDY…RYEG). Residues asparagine 33, asparagine 61, and asparagine 110 are each glycosylated (N-linked (GlcNAc...) asparagine). Cysteine 103 and cysteine 539 form a disulfide bridge. Asparagine 330, asparagine 350, and asparagine 422 each carry an N-linked (GlcNAc...) asparagine glycan. A Plastocyanin-like 3 domain is found at 345–524 (HYGKINITRT…LYASVLSPEK (180 aa)).

The protein belongs to the multicopper oxidase family. Maximal expression in early binucleate microspores; declines considerably in mature trinucleate pollen.

The protein resides in the secreted. Functionally, probable oxidase that may be involved in pollen tube growth. This chain is L-ascorbate oxidase homolog (Bp10), found in Brassica napus (Rape).